We begin with the raw amino-acid sequence, 2506 residues long: Highly reducing polyketide synthase rstn3 (2506 aa).

Positions 8–436 (VEPIAIVGMA…GANAHAILDA (429 aa)) constitute a Ketosynthase family 3 (KS3) domain. Catalysis depends on for beta-ketoacyl synthase activity residues C183, H318, and H358. A Malonyl-CoA:ACP transacylase (MAT) domain is found at 547 to 875 (FIFTGQGAQW…KMVGSLFLSG (329 aa)). The interval 941–1050 (HDLLGSRLPG…ASDQSISSVE (110 aa)) is N-terminal hotdog fold. The PKS/mFAS DH domain maps to 941–1212 (HDLLGSRLPG…FSSLETAVGE (272 aa)). The active-site Proton acceptor; for dehydratase activity is the H973. The interval 1060 to 1212 (NKDSYDRRWY…FSSLETAVGE (153 aa)) is C-terminal hotdog fold. D1125 serves as the catalytic Proton donor; for dehydratase activity. Positions 1263 to 1563 (VTRLAIRSSA…SGADIVLDDY (301 aa)) are methyltransferase (CMet) domain. Residues 1827 to 2093 (GRVDSFYFKE…QDDYVGRVVL (267 aa)) enclose the Enoyl reductase (ER) domain. The Ketoreductase (KR) domain occupies 2116–2296 (ASYLLIGCLG…QATSIALGMI (181 aa)). In terms of domain architecture, Carrier spans 2423–2501 (AVKVTTLGLI…DLAEKVVALA (79 aa)). Position 2460 is an O-(pantetheine 4'-phosphoryl)serine (S2460).

Pantetheine 4'-phosphate is required as a cofactor.

Its pathway is antifungal biosynthesis. Its function is as follows. Highly reducing polyketide synthase; part of the gene cluster that mediates the biosynthesis of the tetrahydropyranyl antifungal agent restricticin that acts as an inhibitor of CYP51 and blocks the ergosterol biosynthesis. The highly reducing polyketide synthase rstn3, the short chain dehydrogenase rstn4, the cyclase rstn5, the FAD-dependent monooxygenase rstn6 and the enoylreductase rstn7 are required to generate the first stable intermediate desmethylrestrictinol. Rstn3 with rstn7 biosynthesize the first polyketide chain intermediate that is reduced by rstn4, followed by epoxidation by rstn6 before 6-endo cyclization via epoxide opening by rstn5 leads to desmethylrestrictinol. The methyltransferase rstn1 then catalyzes the C4 O-methylation of desmethylrestrictinol to produce restrictinol, and the nonribosomal peptide synthetase rstn8 catalyzes the C3 esterification of restrictinol with glycine that leads to restricticin. The sequence is that of Highly reducing polyketide synthase rstn3 from Aspergillus nomiae NRRL (strain ATCC 15546 / NRRL 13137 / CBS 260.88 / M93).